Here is a 207-residue protein sequence, read N- to C-terminus: Small ribosomal subunit protein uS4 (207 aa).

The interval 31-54 is disordered; the sequence is KCKLDSKPGQHGRTSGARTSDYGN. Positions 42-53 are enriched in polar residues; the sequence is GRTSGARTSDYG. The 64-residue stretch at 97-160 folds into the S4 RNA-binding domain; the sequence is SRLDNVVYRM…KKQVRIAEAL (64 aa).

It belongs to the universal ribosomal protein uS4 family. Part of the 30S ribosomal subunit. Contacts protein S5. The interaction surface between S4 and S5 is involved in control of translational fidelity.

One of the primary rRNA binding proteins, it binds directly to 16S rRNA where it nucleates assembly of the body of the 30S subunit. Its function is as follows. With S5 and S12 plays an important role in translational accuracy. This Cupriavidus metallidurans (strain ATCC 43123 / DSM 2839 / NBRC 102507 / CH34) (Ralstonia metallidurans) protein is Small ribosomal subunit protein uS4.